Reading from the N-terminus, the 477-residue chain is UDP-N-acetylmuramate--L-alanine ligase (477 aa).

Residue glycine 122–threonine 128 coordinates ATP.

Belongs to the MurCDEF family.

The protein resides in the cytoplasm. It carries out the reaction UDP-N-acetyl-alpha-D-muramate + L-alanine + ATP = UDP-N-acetyl-alpha-D-muramoyl-L-alanine + ADP + phosphate + H(+). It functions in the pathway cell wall biogenesis; peptidoglycan biosynthesis. Cell wall formation. In Xanthomonas oryzae pv. oryzae (strain MAFF 311018), this protein is UDP-N-acetylmuramate--L-alanine ligase.